The primary structure comprises 307 residues: Nicotinamide/nicotinic acid mononucleotide adenylyltransferase 2 (307 aa).

Residues S16 and F17 each contribute to the NAD(+) site. Position 24 (H24) interacts with ATP. Positions 92, 95, 200, 202, 212, 213, and 232 each coordinate NAD(+). T271–R274 contacts ATP.

The protein belongs to the eukaryotic NMN adenylyltransferase family. Monomer. The cofactor is Mg(2+).

It is found in the golgi apparatus membrane. It localises to the cytoplasmic vesicle membrane. Its subcellular location is the cytoplasm. The protein resides in the cell projection. The protein localises to the axon. The catalysed reaction is beta-nicotinamide D-ribonucleotide + ATP + H(+) = diphosphate + NAD(+). It catalyses the reaction nicotinate beta-D-ribonucleotide + ATP + H(+) = deamido-NAD(+) + diphosphate. The protein operates within cofactor biosynthesis; NAD(+) biosynthesis; NAD(+) from nicotinamide D-ribonucleotide: step 1/1. Its pathway is cofactor biosynthesis; NAD(+) biosynthesis; deamido-NAD(+) from nicotinate D-ribonucleotide: step 1/1. In terms of biological role, nicotinamide/nicotinate-nucleotide adenylyltransferase that acts as an axon maintenance factor. Axon survival factor required for the maintenance of healthy axons: acts by delaying Wallerian axon degeneration, an evolutionarily conserved process that drives the loss of damaged axons. Catalyzes the formation of NAD(+) from nicotinamide mononucleotide (NMN) and ATP. Can also use the deamidated form; nicotinic acid mononucleotide (NaMN) as substrate but with a lower efficiency. Also catalyzes the reverse reaction, i.e. the pyrophosphorolytic cleavage of NAD(+). For the pyrophosphorolytic activity prefers NAD(+), NADH and NaAD as substrates and degrades nicotinic acid adenine dinucleotide phosphate (NHD) less effectively. Also acts as an activator of ADP-ribosylation by supporting the catalytic activity of PARP16 and promoting mono-ADP-ribosylation of ribosomes by PARP16. May be involved in the maintenance of axonal integrity. The chain is Nicotinamide/nicotinic acid mononucleotide adenylyltransferase 2 (nmnat2) from Xenopus tropicalis (Western clawed frog).